The primary structure comprises 57 residues: Potassium channel toxin KTx1 (57 aa).

The signal sequence occupies residues 1 to 13 (FLVLLLVSLMCYA). The propeptide occupies 14 to 18 (EIAEG). 3 cysteine pairs are disulfide-bonded: Cys-24-Cys-37, Cys-30-Cys-42, and Cys-36-Cys-51.

The protein belongs to the scorpion calcin-like family. KTX subfamily. In terms of tissue distribution, expressed by the venom gland.

The protein resides in the secreted. Functionally, this recombinant peptide inhibits voltage-gated potassium channels mKv1.3/KCNA3 (IC(50)=1.70 uM), mKv1.1/KCNA1 (10 uM inhibits 40% of currents) and hKv1.2/KCNA2 (10 uM inhibits 42% of currents). May also increase intracellular calcium release through the activation of nuclear inositol 1,4,5-trisphosphate receptors (ITPR) of cardiomyocytes, thereby causing an increase in the contraction frequency of these cells. This chain is Potassium channel toxin KTx1, found in Isometrus maculatus (Lesser brown scorpion).